A 66-amino-acid chain; its full sequence is Photosystem II reaction center protein J (66 aa).

Residues Leu37–Tyr57 form a helical membrane-spanning segment.

This sequence belongs to the PsbJ family. In terms of assembly, PSII is composed of 1 copy each of membrane proteins PsbA, PsbB, PsbC, PsbD, PsbE, PsbF, PsbH, PsbI, PsbJ, PsbK, PsbL, PsbM, PsbT, PsbX, PsbY, PsbZ, Psb30/Ycf12, peripheral proteins PsbO, CyanoQ (PsbQ), PsbU, PsbV and a large number of cofactors. It forms dimeric complexes.

Its subcellular location is the cellular thylakoid membrane. Functionally, one of the components of the core complex of photosystem II (PSII). PSII is a light-driven water:plastoquinone oxidoreductase that uses light energy to abstract electrons from H(2)O, generating O(2) and a proton gradient subsequently used for ATP formation. It consists of a core antenna complex that captures photons, and an electron transfer chain that converts photonic excitation into a charge separation. The chain is Photosystem II reaction center protein J from Synechococcus sp. (strain WH7803).